Reading from the N-terminus, the 101-residue chain is C-X-C motif chemokine 3 (101 aa).

The signal sequence occupies residues Met1–Ala32. Intrachain disulfides connect Cys37–Cys63 and Cys39–Cys79.

Belongs to the intercrine alpha (chemokine CxC) family.

It is found in the secreted. In terms of biological role, ligand for CXCR2. Has chemotactic activity for neutrophils. May play a role in inflammation and exert its effects on endothelial cells in an autocrine fashion. This Rattus norvegicus (Rat) protein is C-X-C motif chemokine 3 (Cxcl3).